A 303-amino-acid chain; its full sequence is D-alanine--D-alanine ligase (303 aa).

Residues 104-300 form the ATP-grasp domain; the sequence is KLLWNAVGLP…FERLVERVLE (197 aa). 132-187 serves as a coordination point for ATP; that stretch reads IAKLGLPLFVKPASEGSSVGVSKVKTAEQLLPAIEEALKYDSIVLVEENLAGAEYS. Residues D254, E267, and N269 each contribute to the Mg(2+) site.

The protein belongs to the D-alanine--D-alanine ligase family. Requires Mg(2+) as cofactor. Mn(2+) serves as cofactor.

It localises to the cytoplasm. The enzyme catalyses 2 D-alanine + ATP = D-alanyl-D-alanine + ADP + phosphate + H(+). It participates in cell wall biogenesis; peptidoglycan biosynthesis. Its function is as follows. Cell wall formation. The protein is D-alanine--D-alanine ligase of Glaesserella parasuis serovar 5 (strain SH0165) (Haemophilus parasuis).